A 631-amino-acid chain; its full sequence is Mitochondrial Rho GTPase 1 (631 aa).

Topologically, residues 1–605 are cytoplasmic; the sequence is MPAGRGRPLR…TQADLKSSTF (605 aa). A Miro 1 domain is found at 15 to 181; that stretch reads KKDVRILLVG…FYYAQKAVLH (167 aa). 5 residues coordinate GTP: Arg27, Gly29, Lys30, Thr31, and Ser32. A Mg(2+)-binding site is contributed by Thr31. 2 residues coordinate Mg(2+): Pro48 and Asp70. Ser72 serves as a coordination point for GTP. At Lys105 the chain carries N6-acetyllysine. Positions 131, 132, 134, 162, and 163 each coordinate GTP. Residue Lys166 forms a Glycyl lysine isopeptide (Lys-Gly) (interchain with G-Cter in ubiquitin) linkage. Residues 197 to 232 enclose the EF-hand 1 domain; sequence ACIKALTRIFKISDQDNDGTLNDAELNFFQRICFNT. Residues Asp210, Asp212, Asp214, Thr216, and Glu221 each contribute to the Ca(2+) site. Residue Lys248 forms a Glycyl lysine isopeptide (Lys-Gly) (interchain with G-Cter in ubiquitin) linkage. The EF-hand 2 domain maps to 317 to 352; that stretch reads HAYLFLQSTFDKHDLDRDCALSPDELKDLFKVFPYI. Residues Asp330, Asp332, Asp334, Ala336, and Glu341 each contribute to the Ca(2+) site. The Miro 2 domain maps to 429-592; sequence RNVFRCNVIG…FVKLTTMAMY (164 aa). GTP-binding residues include Asn441, Cys442, Gly443, Lys444, Ser445, Gly446, Lys460, Lys541, Asp543, Thr571, and Cys572. Mg(2+) is bound at residue Asn441. Lys585 participates in a covalent cross-link: Glycyl lysine isopeptide (Lys-Gly) (interchain with G-Cter in ubiquitin). The helical; Anchor for type IV membrane protein transmembrane segment at 606 to 628 threads the bilayer; it reads WLRASFGATVFAVLGFAMYKALL. Over 629-631 the chain is Mitochondrial intermembrane; the sequence is KQR.

Belongs to the mitochondrial Rho GTPase family. In terms of assembly, homodimer. Interacts with the kinesin-binding proteins TRAK1/OIP106 and TRAK2/GRIF1, forming a link between mitochondria and the trafficking apparatus of the microtubules. Interacts with RAP1GDS1. Interacts with ARMCX1. Found in a complex with KIF5B, OGT, RHOT2 and TRAK1. In terms of processing, ubiquitinated by PRKN during mitophagy, leading to its degradation and enhancement of mitophagy. Deubiquitinated by USP30. Acetylation on Lys-105 decreases sensitivity of mitochondrial transport to elevated Ca(2+) levels, increases mitochondrial transport and promotes axon growth. Deacetylated by HDAC6 which blocks mitochondrial transport and mediates axon growth inhibition.

The protein resides in the mitochondrion outer membrane. It carries out the reaction GTP + H2O = GDP + phosphate + H(+). The catalysed reaction is ATP + H2O = ADP + phosphate + H(+). The enzyme catalyses UTP + H2O = UDP + phosphate + H(+). Functionally, atypical mitochondrial nucleoside-triphosphatase (NTPase) involved in mitochondrial trafficking. Probably involved in control of anterograde transport of mitochondria and their subcellular distribution. Promotes mitochondrial fission during high calcium conditions. Can hydrolyze GTP, ATP and UTP. The chain is Mitochondrial Rho GTPase 1 (RHOT1) from Bos taurus (Bovine).